The sequence spans 208 residues: Methyl-CpG-binding domain protein 3-like 4 (208 aa).

Belongs to the MBD3L family.

This Homo sapiens (Human) protein is Methyl-CpG-binding domain protein 3-like 4 (MBD3L4).